We begin with the raw amino-acid sequence, 212 residues long: MNDAALPPDVSAALANGLQAQSLDADFAAPLLRYLTLLVRWNKTYNLTAVRDPREMVTRHLLDSLAMQPYIVSGTLADLGTGPGLPGIPLAITRPQLQVTLVESNGKKARFMREALRHLALGNARVAEARAEAVDEPAAYDHLTARALDTLAGIIAVGGHLLRPGGSLLAMKGVYPREEIAALPAGWRVGDVHPLQVPGLEGERHLVVVHKD.

Residues Gly80, Leu85, 131 to 132, and Arg146 contribute to the S-adenosyl-L-methionine site; that span reads AE.

The protein belongs to the methyltransferase superfamily. RNA methyltransferase RsmG family.

It localises to the cytoplasm. It catalyses the reaction guanosine(527) in 16S rRNA + S-adenosyl-L-methionine = N(7)-methylguanosine(527) in 16S rRNA + S-adenosyl-L-homocysteine. Functionally, specifically methylates the N7 position of guanine in position 527 of 16S rRNA. The polypeptide is Ribosomal RNA small subunit methyltransferase G (Xanthomonas campestris pv. campestris (strain B100)).